Consider the following 474-residue polypeptide: PRAME family member 17 (474 aa).

Residues 97 to 124 (RWKLQVLDLRDVDGNFWTIWSGARALSC) form an LRR 1; degenerate repeat. The LRR 2; degenerate repeat unit spans residues 179–203 (HLCCNKVQNYSMPTSSFRNLLKRVY). The stretch at 204–230 (PDSIQELEIKRKCSLNKTGKFAPYLSQ) is one LRR 3; degenerate repeat. Residues 231–265 (MSNLRKLFLAFGYDDELYVSGQQQFVPDLDCPFLC) form an LRR 4; degenerate repeat. LRR repeat units lie at residues 266–291 (LYYP…LRCL), 292–323 (KNPL…SQLK), 324–342 (ELHL…PLGA), 348–375 (AATL…ALSR), and 376–400 (CSQL…LLCH).

This sequence belongs to the PRAME family.

This Homo sapiens (Human) protein is PRAME family member 17.